The primary structure comprises 285 residues: BAG family molecular chaperone regulator 2 (285 aa).

In terms of domain architecture, Ubiquitin-like spans 37 to 113; it reads RGIRVRVKYG…LILIEDPISQ (77 aa). In terms of domain architecture, BAG spans 132–210; the sequence is AISDISFQVE…KYVEALDLLK (79 aa). S244 bears the Phosphoserine mark.

As to quaternary structure, binds to the ATPase domain of HSP70/HSC70 chaperones.

Functionally, co-chaperone that regulates diverse cellular pathways, such as programmed cell death and stress responses. The chain is BAG family molecular chaperone regulator 2 (BAG2) from Arabidopsis thaliana (Mouse-ear cress).